The sequence spans 375 residues: Glutaconyl-CoA decarboxylase subunit beta (375 aa).

Helical transmembrane passes span 16–39, 46–65, 74–96, 107–130, 137–153, 160–178, 208–232, 254–271, 284–302, 316–332, and 345–369; these read GFVA…YLAI, LLLS…RTGF, LILG…GAMT, TLLL…LLGF, AIGI…IYLA, LLGA…VPLI, VVFP…IGML, ALMN…GLTM, IICL…GVLF, PLIG…AARV, and FLLM…GTML.

Belongs to the GcdB/MmdB/OadB family. In terms of assembly, heterooctamer consisting of two alpha, two beta, two gamma and two delta subunits. Post-translationally, the N-terminus is blocked.

The protein resides in the cell membrane. The enzyme catalyses (2E)-glutaconyl-CoA + Na(+)(in) + H(+) = (2E)-butenoyl-CoA + Na(+)(out) + CO2. It participates in amino-acid degradation; L-glutamate degradation via hydroxyglutarate pathway; crotonoyl-CoA from L-glutamate: step 5/5. Tunnel subunit of the primary sodium pump glutaconyl-CoA decarboxylase (GCD). The sequence is that of Glutaconyl-CoA decarboxylase subunit beta (gcdB) from Acidaminococcus fermentans (strain ATCC 25085 / DSM 20731 / CCUG 9996 / CIP 106432 / VR4).